Here is a 474-residue protein sequence, read N- to C-terminus: Ribosomal RNA small subunit methyltransferase F (474 aa).

S-adenosyl-L-methionine is bound by residues 121–127, E145, D172, and D190; that span reads ASAPGSK. Catalysis depends on C243, which acts as the Nucleophile.

It belongs to the class I-like SAM-binding methyltransferase superfamily. RsmB/NOP family.

The protein localises to the cytoplasm. The catalysed reaction is cytidine(1407) in 16S rRNA + S-adenosyl-L-methionine = 5-methylcytidine(1407) in 16S rRNA + S-adenosyl-L-homocysteine + H(+). Specifically methylates the cytosine at position 1407 (m5C1407) of 16S rRNA. The sequence is that of Ribosomal RNA small subunit methyltransferase F from Shewanella piezotolerans (strain WP3 / JCM 13877).